Reading from the N-terminus, the 248-residue chain is MTIRVGVLGARGKVGQAICAAVRAADDLELVAEVDKGDALETFTETGTEVVVDFTHPDVVMGNLKFLVEHGIHAVVGTTGFDAARLDEVRGWLAASPATGVLIAPNFAIGAVLSMRFAEQAARFFESVEVIELHHPNKADAPSGTAYRTAGLIAEARNRAGVGRSPDATSTELDGARGADVDGVRVHSVRLAGLVAHQEVLFGTQGETLTIRHDSIDRSSFAPGVLLGVREIGKRPGLTVGLDPFLDL.

Residues 9-14, 77-79, and 104-107 each bind NAD(+); these read GARGKV, GTT, and APNF. Catalysis depends on histidine 134, which acts as the Proton donor/acceptor. A (S)-2,3,4,5-tetrahydrodipicolinate-binding site is contributed by histidine 135. The Proton donor role is filled by lysine 138. 144 to 145 is a (S)-2,3,4,5-tetrahydrodipicolinate binding site; that stretch reads GT.

Belongs to the DapB family.

Its subcellular location is the cytoplasm. It carries out the reaction (S)-2,3,4,5-tetrahydrodipicolinate + NAD(+) + H2O = (2S,4S)-4-hydroxy-2,3,4,5-tetrahydrodipicolinate + NADH + H(+). The enzyme catalyses (S)-2,3,4,5-tetrahydrodipicolinate + NADP(+) + H2O = (2S,4S)-4-hydroxy-2,3,4,5-tetrahydrodipicolinate + NADPH + H(+). Its pathway is amino-acid biosynthesis; L-lysine biosynthesis via DAP pathway; (S)-tetrahydrodipicolinate from L-aspartate: step 4/4. Functionally, catalyzes the conversion of 4-hydroxy-tetrahydrodipicolinate (HTPA) to tetrahydrodipicolinate. This is 4-hydroxy-tetrahydrodipicolinate reductase from Nocardia farcinica (strain IFM 10152).